The following is a 136-amino-acid chain: MARTKQTARKSTGGKAPRKQLATKAARKSAPATGGVKKPHRYRPGTVALREIRRYQKSTELLIRKLPFQRLVREIAQEFKTDLRFQSSAVMALQEAREAYLVGLFEDTNLCAIHAKRVTIMPKDIQLVSRIRGERA.

Residues 1–43 (MARTKQTARKSTGGKAPRKQLATKAARKSAPATGGVKKPHRYR) form a disordered region. An Asymmetric dimethylarginine modification is found at Arg-3. Arg-3 bears the Citrulline; alternate mark. Phosphothreonine is present on Thr-4. At Lys-5 the chain carries Allysine; alternate. Lys-5 carries the N6,N6,N6-trimethyllysine; alternate modification. An N6,N6-dimethyllysine; alternate modification is found at Lys-5. An N6-(2-hydroxyisobutyryl)lysine; alternate modification is found at Lys-5. Lys-5 is modified (N6-(beta-hydroxybutyryl)lysine; alternate). Residue Lys-5 is modified to N6-acetyllysine; alternate. At Lys-5 the chain carries N6-methyllysine; alternate. Gln-6 is subject to 5-glutamyl dopamine; alternate. Gln-6 is subject to 5-glutamyl serotonin; alternate. Thr-7 carries the phosphothreonine modification. Arg-9 carries the citrulline; alternate modification. Arg-9 is modified (symmetric dimethylarginine). Lys-10 is modified (N6,N6,N6-trimethyllysine; alternate). Lys-10 is subject to N6,N6-dimethyllysine; alternate. N6-(2-hydroxyisobutyryl)lysine; alternate is present on Lys-10. Residue Lys-10 is modified to N6-(beta-hydroxybutyryl)lysine; alternate. Lys-10 carries the N6-acetyllysine; alternate modification. Lys-10 bears the N6-methyllysine; alternate mark. Lys-10 is modified (N6-lactoyllysine; alternate). The residue at position 11 (Ser-11) is an ADP-ribosylserine; alternate. Ser-11 is modified (phosphoserine; alternate). Thr-12 bears the Phosphothreonine mark. Lys-15 is modified (N6-(2-hydroxyisobutyryl)lysine; alternate). Lys-15 is modified (N6-(beta-hydroxybutyryl)lysine; alternate). Lys-15 bears the N6-acetyllysine; alternate mark. Lys-15 bears the N6-lactoyllysine; alternate mark. The residue at position 15 (Lys-15) is an N6-glutaryllysine; alternate. Lys-15 carries the post-translational modification N6-succinyllysine; alternate. The residue at position 18 (Arg-18) is an Asymmetric dimethylarginine. Citrulline; alternate is present on Arg-18. N6-(2-hydroxyisobutyryl)lysine; alternate is present on residues Lys-19 and Lys-24. Lys-19 and Lys-24 each carry N6-(beta-hydroxybutyryl)lysine; alternate. 2 positions are modified to N6-acetyllysine; alternate: Lys-19 and Lys-24. 2 positions are modified to N6-methyllysine; alternate: Lys-19 and Lys-24. Lys-19 and Lys-24 each carry N6-lactoyllysine; alternate. N6-glutaryllysine; alternate occurs at positions 19 and 24. 2 positions are modified to N6-butyryllysine; alternate: Lys-19 and Lys-24. A Citrulline modification is found at Arg-27. Lys-28 carries the post-translational modification N6,N6,N6-trimethyllysine; alternate. At Lys-28 the chain carries N6,N6-dimethyllysine; alternate. Lys-28 carries the post-translational modification N6-(2-hydroxyisobutyryl)lysine; alternate. Lys-28 is modified (N6-acetyllysine; alternate). Lys-28 carries the N6-methyllysine; alternate modification. Lys-28 carries the N6-lactoyllysine; alternate modification. Position 28 is an N6-glutaryllysine; alternate (Lys-28). ADP-ribosylserine; alternate is present on Ser-29. Ser-29 is subject to Phosphoserine; alternate. Lys-37 carries the post-translational modification N6,N6,N6-trimethyllysine; alternate. Lys-37 carries the post-translational modification N6,N6-dimethyllysine; alternate. Lys-37 carries the N6-(2-hydroxyisobutyryl)lysine; alternate modification. An N6-acetyllysine; alternate modification is found at Lys-37. Lys-37 bears the N6-methyllysine; alternate mark. An N6-methyllysine modification is found at Lys-38. Tyr-42 is modified (phosphotyrosine). At Lys-57 the chain carries N6,N6,N6-trimethyllysine; alternate. An N6-(2-hydroxyisobutyryl)lysine; alternate modification is found at Lys-57. At Lys-57 the chain carries N6-(beta-hydroxybutyryl)lysine; alternate. Lys-57 bears the N6-acetyllysine; alternate mark. Position 57 is an N6-lactoyllysine; alternate (Lys-57). An N6-glutaryllysine; alternate modification is found at Lys-57. An N6-succinyllysine; alternate modification is found at Lys-57. The residue at position 57 (Lys-57) is an N6-methyllysine. Position 58 is a phosphoserine (Ser-58). 2 positions are modified to N6-(2-hydroxyisobutyryl)lysine; alternate: Lys-65 and Lys-80. N6-methyllysine; alternate occurs at positions 65 and 80. The residue at position 80 (Lys-80) is an N6,N6,N6-trimethyllysine; alternate. Lys-80 is subject to N6,N6-dimethyllysine; alternate. Residue Lys-80 is modified to N6-acetyllysine; alternate. At Lys-80 the chain carries N6-lactoyllysine; alternate. Lys-80 carries the N6-glutaryllysine; alternate modification. At Lys-80 the chain carries N6-succinyllysine; alternate. Position 81 is a phosphothreonine (Thr-81). Position 87 is a phosphoserine (Ser-87). Thr-108 carries the phosphothreonine modification. An N6-acetyllysine; alternate mark is found at Lys-116 and Lys-123. 2 positions are modified to N6-glutaryllysine; alternate: Lys-116 and Lys-123. Position 123 is an N6-(2-hydroxyisobutyryl)lysine; alternate (Lys-123). Position 123 is an N6-methyllysine; alternate (Lys-123). Residue Lys-123 is modified to N6-succinyllysine; alternate.

Belongs to the histone H3 family. In terms of assembly, the nucleosome is a histone octamer containing two molecules each of H2A, H2B, H3 and H4 assembled in one H3-H4 heterotetramer and two H2A-H2B heterodimers. The octamer wraps approximately 147 bp of DNA. During nucleosome assembly the chaperone ASF1A interacts with the histone H3-H4 heterodimer. Acetylation is generally linked to gene activation. Acetylation on Lys-10 (H3K9ac) impairs methylation at Arg-9 (H3R8me2s). Acetylation on Lys-19 (H3K18ac) and Lys-24 (H3K24ac) favors methylation at Arg-18 (H3R17me). Acetylation at Lys-123 (H3K122ac) by EP300/p300 plays a central role in chromatin structure: localizes at the surface of the histone octamer and stimulates transcription, possibly by promoting nucleosome instability. In terms of processing, citrullination at Arg-9 (H3R8ci) and/or Arg-18 (H3R17ci) by PADI4 impairs methylation and represses transcription. Post-translationally, asymmetric dimethylation at Arg-18 (H3R17me2a) by CARM1 is linked to gene activation. Symmetric dimethylation at Arg-9 (H3R8me2s) by PRMT5 is linked to gene repression. Asymmetric dimethylation at Arg-3 (H3R2me2a) by PRMT6 is linked to gene repression and is mutually exclusive with H3 Lys-5 methylation (H3K4me2 and H3K4me3). H3R2me2a is present at the 3' of genes regardless of their transcription state and is enriched on inactive promoters, while it is absent on active promoters. Methylation at Lys-5 (H3K4me), Lys-37 (H3K36me) and Lys-80 (H3K79me) are linked to gene activation. Methylation at Lys-5 (H3K4me) facilitates subsequent acetylation of H3 and H4. Methylation at Lys-80 (H3K79me) is associated with DNA double-strand break (DSB) responses and is a specific target for TP53BP1. Methylation at Lys-10 (H3K9me) and Lys-28 (H3K27me) are linked to gene repression. Methylation at Lys-10 (H3K9me) is a specific target for HP1 proteins (CBX1, CBX3 and CBX5) and prevents subsequent phosphorylation at Ser-11 (H3S10ph) and acetylation of H3 and H4. Methylation at Lys-5 (H3K4me) and Lys-80 (H3K79me) require preliminary monoubiquitination of H2B at 'Lys-120'. Methylation at Lys-10 (H3K9me) and Lys-28 (H3K27me) are enriched in inactive X chromosome chromatin. Monomethylation at Lys-57 (H3K56me1) by EHMT2/G9A in G1 phase promotes interaction with PCNA and is required for DNA replication. In terms of processing, phosphorylated at Thr-4 (H3T3ph) by HASPIN during prophase and dephosphorylated during anaphase. Phosphorylation at Ser-11 (H3S10ph) by AURKB is crucial for chromosome condensation and cell-cycle progression during mitosis and meiosis. In addition phosphorylation at Ser-11 (H3S10ph) by RPS6KA4 and RPS6KA5 is important during interphase because it enables the transcription of genes following external stimulation, like mitogens, stress, growth factors or UV irradiation and result in the activation of genes, such as c-fos and c-jun. Phosphorylation at Ser-11 (H3S10ph), which is linked to gene activation, prevents methylation at Lys-10 (H3K9me) but facilitates acetylation of H3 and H4. Phosphorylation at Ser-11 (H3S10ph) by AURKB mediates the dissociation of HP1 proteins (CBX1, CBX3 and CBX5) from heterochromatin. Phosphorylation at Ser-11 (H3S10ph) is also an essential regulatory mechanism for neoplastic cell transformation. Phosphorylated at Ser-29 (H3S28ph) by MAP3K20 isoform 1, RPS6KA5 or AURKB during mitosis or upon ultraviolet B irradiation. Phosphorylation at Thr-7 (H3T6ph) by PRKCB is a specific tag for epigenetic transcriptional activation that prevents demethylation of Lys-5 (H3K4me) by LSD1/KDM1A. At centromeres, specifically phosphorylated at Thr-12 (H3T11ph) from prophase to early anaphase, by DAPK3 and PKN1. Phosphorylation at Thr-12 (H3T11ph) by PKN1 or isoform M2 of PKM (PKM2) is a specific tag for epigenetic transcriptional activation that promotes demethylation of Lys-10 (H3K9me) by KDM4C/JMJD2C. Phosphorylation at Tyr-42 (H3Y41ph) by JAK2 promotes exclusion of CBX5 (HP1 alpha) from chromatin. Post-translationally, ubiquitinated. Lysine deamination at Lys-5 (H3K4all) to form allysine is mediated by LOXL2. Allysine formation by LOXL2 only takes place on H3K4me3 and results in gene repression. In terms of processing, butyrylation of histones marks active promoters and competes with histone acetylation. It is present during late spermatogenesis. Post-translationally, succinylation at Lys-80 (H3K79succ) by KAT2A takes place with a maximum frequency around the transcription start sites of genes. It gives a specific tag for epigenetic transcription activation. Desuccinylation at Lys-123 (H3K122succ) by SIRT7 in response to DNA damage promotes chromatin condensation and double-strand breaks (DSBs) repair. Serine ADP-ribosylation constitutes the primary form of ADP-ribosylation of proteins in response to DNA damage. Serine ADP-ribosylation at Ser-11 (H3S10ADPr) is mutually exclusive with phosphorylation at Ser-11 (H3S10ph) and impairs acetylation at Lys-10 (H3K9ac).

Its subcellular location is the nucleus. The protein localises to the chromosome. Its function is as follows. Core component of nucleosome. Nucleosomes wrap and compact DNA into chromatin, limiting DNA accessibility to the cellular machineries which require DNA as a template. Histones thereby play a central role in transcription regulation, DNA repair, DNA replication and chromosomal stability. DNA accessibility is regulated via a complex set of post-translational modifications of histones, also called histone code, and nucleosome remodeling. The chain is Histone H3-7 from Homo sapiens (Human).